A 556-amino-acid chain; its full sequence is (S)-N-methylcanadine 1-hydroxylase CYP82Y1 (556 aa).

A helical transmembrane segment spans residues 18–38; it reads TAVGTLILAFLLTLSPVIIYY. A heme-binding site is contributed by Cys500.

The protein belongs to the cytochrome P450 family. The cofactor is heme. As to expression, highly expressed in capsules. Expressed is stems.

The protein resides in the membrane. It carries out the reaction (S)-cis-N-methylcanadine + reduced [NADPH--hemoprotein reductase] + O2 = (S)-1-hydroxy-N-methylcanadine + oxidized [NADPH--hemoprotein reductase] + H2O + H(+). It participates in alkaloid biosynthesis. In terms of biological role, cytochrome P450 involved in the biosynthesis of the benzylisoquinoline alkaloid noscapine. Converts (S)-N-methylcanadine to (S)-1-hydroxy-N-methylcanadine. In Papaver somniferum (Opium poppy), this protein is (S)-N-methylcanadine 1-hydroxylase CYP82Y1.